Reading from the N-terminus, the 476-residue chain is Rab-3A-interacting protein (476 aa).

Residues Ser-163 and Ser-165 each carry the phosphoserine; by PKB/AKT1 modification. Residues 165 to 260 (SVLEVREKGY…EVAALKTLVL (96 aa)) adopt a coiled-coil conformation. Positions 262–297 (SSPTSPTQEPLPGGKTPFKKGHTRNKSTSSAMSGSH) are disordered. A phosphoserine mark is found at Ser-263, Ser-266, Ser-288, and Ser-296. Residues 287–297 (KSTSSAMSGSH) are compositionally biased toward polar residues. An important for RAB11A binding region spans residues 435 to 444 (TYIRYIQQGL).

This sequence belongs to the SEC2 family. In terms of assembly, homodimer. Interacts with the N-terminal region of SSX2. Interacts with the GDP-bound forms of RAB8A and RAB8B. The interaction with RAB8A is prevented by phosphorylation of RAB8A at 'Thr-72'. Interacts with the GDP-bound forms of RAB3A and RAB3D. Interacts with DCDC1. Interacts (via the N-terminal region) with TRAPPC14; this interaction mediates RAB3IP association with the TRAPP II complex. Forms a heterotetramer with RAB11A where RAB3IP homodimer binds two RAB11A subunits. Forms a complex with RAB11A and RAB11FIP3, probably a heterohexamer with two of each protein subunit, where Rabin8/RAB3IP and RAB11FIP3 simultaneously bind to RAB11A; the complex promotes preciliary trafficking. Forms a complex containing RAB11A, ASAP1, RAB3IP, RAP11FIP3 and ARF4; the complex promotes preciliary trafficking; the complex binds to RHO in photoreceptor cells and promotes RHO ciliary transport. Phosphorylated by AKT1; the phosphorylation alters its GEF activity. In terms of tissue distribution, expressed in brain, kidney, heart, pancreas and placenta. Not detected in skeletal muscle or liver.

Its subcellular location is the cytoplasm. It is found in the nucleus. The protein resides in the cytoskeleton. The protein localises to the cell projection. It localises to the lamellipodium. Its subcellular location is the vesicle. It is found in the microtubule organizing center. The protein resides in the centrosome. Phosphorylation by ATK1 alters its GEF activity. Complex formation with RAB11A and RAB11FIP3 and ciliogenesis function are competitively inhibited by RAB11A-WDR44 interaction. Functionally, guanine nucleotide exchange factor (GEF) which may activate RAB8A and RAB8B. Promotes the exchange of GDP to GTP, converting inactive GDP-bound Rab proteins into their active GTP-bound form. Mediates the release of GDP from RAB8A and RAB8B but not from RAB3A or RAB5. Modulates actin organization and promotes polarized transport of RAB8A-specific vesicles to the cell surface. Together with RAB11A, RAB8A, the exocyst complex, PARD3, PRKCI, ANXA2, CDC42 and DNMBP promotes transcytosis of PODXL to the apical membrane initiation sites (AMIS), apical surface formation and lumenogenesis. Part of the ciliary targeting complex containing Rab11, ASAP1, RAB3IP and RAB11FIP3 and ARF4 that promotes RAB3IP preciliary vesicle trafficking to mother centriole and ciliogenesis initiation. The chain is Rab-3A-interacting protein from Homo sapiens (Human).